The chain runs to 237 residues: uncharacterized protein (237 aa).

The a divalent metal cation site is built by glutamate 91, glutamate 93, and aspartate 122.

It belongs to the FAH family.

This is an uncharacterized protein from Methanocaldococcus jannaschii (strain ATCC 43067 / DSM 2661 / JAL-1 / JCM 10045 / NBRC 100440) (Methanococcus jannaschii).